Consider the following 188-residue polypeptide: dCTP deaminase (188 aa).

DCTP-binding positions include 111–116 (KSTYAR), 135–137 (TLE), Gln-156, Tyr-170, and Gln-180. The Proton donor/acceptor role is filled by Glu-137.

The protein belongs to the dCTP deaminase family. Homotrimer.

The enzyme catalyses dCTP + H2O + H(+) = dUTP + NH4(+). It functions in the pathway pyrimidine metabolism; dUMP biosynthesis; dUMP from dCTP (dUTP route): step 1/2. Its function is as follows. Catalyzes the deamination of dCTP to dUTP. The polypeptide is dCTP deaminase (Laribacter hongkongensis (strain HLHK9)).